The sequence spans 504 residues: Apoptosis inhibitor 5 (504 aa).

The segment at 1-360 is ARM-like and Heat-like helical repeats; sequence MPTVEELYRN…HQLGRKLPDF (360 aa). K251 carries the post-translational modification N6-acetyllysine. The leucine-zipper stretch occupies residues 370-391; the sequence is LKDFKIRLQYFARGLQVYIRQL. The residue at position 399 (T399) is a Phosphothreonine. Residues 452–504 are disordered; it reads GQKRASEDTTSGSPPKKSSAGPKRDARQIYNPPSGKYSSNLGNFNYERSLQGK. A Nuclear localization signal motif is present at residues 454–475; it reads KRASEDTTSGSPPKKSSAGPKR. Residues S462, S464, and S469 each carry the phosphoserine modification. Positions 462–472 are enriched in low complexity; the sequence is SGSPPKKSSAG. A compositionally biased stretch (polar residues) spans 487–504; the sequence is KYSSNLGNFNYERSLQGK.

This sequence belongs to the API5 family. In terms of assembly, monomer. Interacts with FGF2 and ACIN1. Post-translationally, acetylation at Lys-251 impairs antiapoptotic function.

It localises to the nucleus. It is found in the cytoplasm. Its function is as follows. Antiapoptotic factor that may have a role in protein assembly. Negatively regulates ACIN1. By binding to ACIN1, it suppresses ACIN1 cleavage from CASP3 and ACIN1-mediated DNA fragmentation. Also known to efficiently suppress E2F1-induced apoptosis. The sequence is that of Apoptosis inhibitor 5 (API5) from Pongo abelii (Sumatran orangutan).